Consider the following 257-residue polypeptide: Thiazole synthase (257 aa).

The active-site Schiff-base intermediate with DXP is lysine 97. Residues glycine 158, 184 to 185 (AG), and 206 to 207 (NT) each bind 1-deoxy-D-xylulose 5-phosphate.

Belongs to the ThiG family. As to quaternary structure, homotetramer. Forms heterodimers with either ThiH or ThiS.

It localises to the cytoplasm. The catalysed reaction is [ThiS sulfur-carrier protein]-C-terminal-Gly-aminoethanethioate + 2-iminoacetate + 1-deoxy-D-xylulose 5-phosphate = [ThiS sulfur-carrier protein]-C-terminal Gly-Gly + 2-[(2R,5Z)-2-carboxy-4-methylthiazol-5(2H)-ylidene]ethyl phosphate + 2 H2O + H(+). It participates in cofactor biosynthesis; thiamine diphosphate biosynthesis. In terms of biological role, catalyzes the rearrangement of 1-deoxy-D-xylulose 5-phosphate (DXP) to produce the thiazole phosphate moiety of thiamine. Sulfur is provided by the thiocarboxylate moiety of the carrier protein ThiS. In vitro, sulfur can be provided by H(2)S. This chain is Thiazole synthase, found in Phocaeicola vulgatus (strain ATCC 8482 / DSM 1447 / JCM 5826 / CCUG 4940 / NBRC 14291 / NCTC 11154) (Bacteroides vulgatus).